Reading from the N-terminus, the 259-residue chain is Phosphatidylglycerol--prolipoprotein diacylglyceryl transferase (259 aa).

Transmembrane regions (helical) follow at residues 9–29 (IGPF…VLAV), 47–67 (IDFI…YYVI), 83–103 (IWNG…VLFI), and 109–129 (VLNP…AQAI). Arg131 contributes to the a 1,2-diacyl-sn-glycero-3-phospho-(1'-sn-glycerol) binding site. The next 3 helical transmembrane spans lie at 167 to 187 (MPTF…ICYL), 194 to 214 (LLEG…RFVI), and 227 to 247 (LRVS…FVIL).

The protein belongs to the Lgt family.

The protein resides in the cell membrane. The catalysed reaction is L-cysteinyl-[prolipoprotein] + a 1,2-diacyl-sn-glycero-3-phospho-(1'-sn-glycerol) = an S-1,2-diacyl-sn-glyceryl-L-cysteinyl-[prolipoprotein] + sn-glycerol 1-phosphate + H(+). The protein operates within protein modification; lipoprotein biosynthesis (diacylglyceryl transfer). Catalyzes the transfer of the diacylglyceryl group from phosphatidylglycerol to the sulfhydryl group of the N-terminal cysteine of a prolipoprotein, the first step in the formation of mature lipoproteins. The sequence is that of Phosphatidylglycerol--prolipoprotein diacylglyceryl transferase from Streptococcus uberis (strain ATCC BAA-854 / 0140J).